The primary structure comprises 272 residues: Small ribosomal subunit protein uS2 (272 aa).

A compositionally biased stretch (basic and acidic residues) spans 224–233 (EGKKAREERQ). A disordered region spans residues 224-272 (EGKKAREERQLAAAKDAAGDAKPEAEEAPAAAEAEEAPAAEAEEAPAAE). Residues 256 to 272 (EAEEAPAAEAEEAPAAE) are compositionally biased toward acidic residues.

The protein belongs to the universal ribosomal protein uS2 family.

The sequence is that of Small ribosomal subunit protein uS2 from Corynebacterium glutamicum (strain ATCC 13032 / DSM 20300 / JCM 1318 / BCRC 11384 / CCUG 27702 / LMG 3730 / NBRC 12168 / NCIMB 10025 / NRRL B-2784 / 534).